The primary structure comprises 1414 residues: DNA-directed RNA polymerase subunit beta' (1414 aa).

Cysteine 70, cysteine 72, cysteine 85, and cysteine 88 together coordinate Zn(2+). The Mg(2+) site is built by aspartate 460, aspartate 462, and aspartate 464. Zn(2+) contacts are provided by cysteine 815, cysteine 889, cysteine 896, and cysteine 899. The interval glutamate 1395–serine 1414 is disordered.

The protein belongs to the RNA polymerase beta' chain family. As to quaternary structure, the RNAP catalytic core consists of 2 alpha, 1 beta, 1 beta' and 1 omega subunit. When a sigma factor is associated with the core the holoenzyme is formed, which can initiate transcription. Mg(2+) is required as a cofactor. It depends on Zn(2+) as a cofactor.

It carries out the reaction RNA(n) + a ribonucleoside 5'-triphosphate = RNA(n+1) + diphosphate. DNA-dependent RNA polymerase catalyzes the transcription of DNA into RNA using the four ribonucleoside triphosphates as substrates. This is DNA-directed RNA polymerase subunit beta' from Herminiimonas arsenicoxydans.